The following is a 93-amino-acid chain: Small ribosomal subunit protein uS17 (93 aa).

Belongs to the universal ribosomal protein uS17 family. As to quaternary structure, part of the 30S ribosomal subunit.

One of the primary rRNA binding proteins, it binds specifically to the 5'-end of 16S ribosomal RNA. This Corynebacterium aurimucosum (strain ATCC 700975 / DSM 44827 / CIP 107346 / CN-1) (Corynebacterium nigricans) protein is Small ribosomal subunit protein uS17.